A 337-amino-acid polypeptide reads, in one-letter code: Transaldolase (337 aa).

The short motif at 1 to 10 (MSGSPVKRQR) is the Nuclear localization signal element. Position 115 is an N6-acetyllysine (Lys-115). The active-site Schiff-base intermediate with substrate is the Lys-142. Lys-219 is subject to N6-acetyllysine. Phosphoserine is present on residues Ser-237 and Ser-256. Residues Lys-269, Lys-286, and Lys-321 each carry the N6-acetyllysine modification.

Belongs to the transaldolase family. Type 1 subfamily. As to quaternary structure, homodimer. Interacts with KPNA1 and KPNA4.

It is found in the nucleus. It localises to the cytoplasm. The enzyme catalyses D-sedoheptulose 7-phosphate + D-glyceraldehyde 3-phosphate = D-erythrose 4-phosphate + beta-D-fructose 6-phosphate. Its pathway is carbohydrate degradation; pentose phosphate pathway; D-glyceraldehyde 3-phosphate and beta-D-fructose 6-phosphate from D-ribose 5-phosphate and D-xylulose 5-phosphate (non-oxidative stage): step 2/3. In terms of biological role, catalyzes the rate-limiting step of the non-oxidative phase in the pentose phosphate pathway. Catalyzes the reversible conversion of sedheptulose-7-phosphate and D-glyceraldehyde 3-phosphate into erythrose-4-phosphate and beta-D-fructose 6-phosphate. This Rattus norvegicus (Rat) protein is Transaldolase (Taldo1).